We begin with the raw amino-acid sequence, 354 residues long: Ferrochelatase (354 aa).

Fe cation is bound by residues His204 and Glu306.

It belongs to the ferrochelatase family.

The protein localises to the cytoplasm. It carries out the reaction heme b + 2 H(+) = protoporphyrin IX + Fe(2+). Its pathway is porphyrin-containing compound metabolism; protoheme biosynthesis; protoheme from protoporphyrin-IX: step 1/1. Functionally, catalyzes the ferrous insertion into protoporphyrin IX. The sequence is that of Ferrochelatase from Coxiella burnetii (strain Dugway 5J108-111).